The chain runs to 86 residues: DNA-directed RNA polymerase subunit Rpo6 (86 aa).

The protein belongs to the archaeal Rpo6/eukaryotic RPB6 RNA polymerase subunit family. In terms of assembly, part of the RNA polymerase complex.

It localises to the cytoplasm. The catalysed reaction is RNA(n) + a ribonucleoside 5'-triphosphate = RNA(n+1) + diphosphate. In terms of biological role, DNA-dependent RNA polymerase (RNAP) catalyzes the transcription of DNA into RNA using the four ribonucleoside triphosphates as substrates. This chain is DNA-directed RNA polymerase subunit Rpo6, found in Sulfurisphaera tokodaii (strain DSM 16993 / JCM 10545 / NBRC 100140 / 7) (Sulfolobus tokodaii).